Consider the following 75-residue polypeptide: Large ribosomal subunit protein bL28 (75 aa).

The tract at residues 1–21 is disordered; it reads MARVCQVTGKRPMSGNKRSHA.

Belongs to the bacterial ribosomal protein bL28 family.

This chain is Large ribosomal subunit protein bL28, found in Blochmanniella pennsylvanica (strain BPEN).